Here is a 459-residue protein sequence, read N- to C-terminus: Vitronectin (459 aa).

An N-terminal signal peptide occupies residues 1 to 19 (MAPLRPLLMLALLAWVALA). Residues 20-63 (DQESCKGRCTDGFIAERKCQCDELCSYYQSCCTDYVAECKPQVT) enclose the SMB domain. Intrachain disulfides connect cysteine 24-cysteine 28, cysteine 24-cysteine 40, cysteine 28-cysteine 58, cysteine 38-cysteine 40, cysteine 38-cysteine 51, cysteine 44-cysteine 50, and cysteine 51-cysteine 58. Residues 64–66 (RGD) carry the Cell attachment site motif. Sulfotyrosine is present on residues tyrosine 75, tyrosine 78, and tyrosine 80. 2 N-linked (GlcNAc...) asparagine glycosylation sites follow: asparagine 87 and asparagine 146. Hemopexin repeat units follow at residues 135 to 179 (GKPF…VWGI), 180 to 227 (KGPI…FKGI), and 228 to 285 (PDDV…FALM). Phosphoserine is present on residues serine 289 and serine 378. Residues 338–380 (LKPSQPKMTKSARRSGKRYRSRRGRGRGRGHSRSQKSHRQSRS) form a disordered region. Positions 347–378 (KSARRSGKRYRSRRGRGRGRGHSRSQKSHRQS) are enriched in basic residues. Sulfotyrosine occurs at positions 398 and 401. Residues 400-453 (DYKMDWLVPATCEPIQSVYFFSGEEYYRVNLRTQRVDTVTPPYPRSIAQYWLGC) form a Hemopexin 4 repeat.

In terms of assembly, monomer. Interacts with SERPINE1/PAI1 and C1QBP. In terms of processing, sulfated on tyrosine residues. N- and O-glycosylated. Post-translationally, it has been suggested that the active SMB domain may be permitted considerable disulfide bond heterogeneity or variability, thus two alternate disulfide patterns based on 3D structures are described with 1 disulfide bond conserved in both. Plasma.

Its subcellular location is the secreted. The protein localises to the extracellular space. Vitronectin is a cell adhesion and spreading factor found in serum and tissues. Vitronectin interact with glycosaminoglycans and proteoglycans. Is recognized by certain members of the integrin family and serves as a cell-to-substrate adhesion molecule. Inhibitor of the membrane-damaging effect of the terminal cytolytic complement pathway. The protein is Vitronectin (VTN) of Sus scrofa (Pig).